The sequence spans 286 residues: Glycine--tRNA ligase alpha subunit (286 aa).

Belongs to the class-II aminoacyl-tRNA synthetase family. In terms of assembly, tetramer of two alpha and two beta subunits.

The protein localises to the cytoplasm. The enzyme catalyses tRNA(Gly) + glycine + ATP = glycyl-tRNA(Gly) + AMP + diphosphate. This Thermotoga sp. (strain RQ2) protein is Glycine--tRNA ligase alpha subunit.